Here is a 392-residue protein sequence, read N- to C-terminus: MVDQLEDSVIETNYDEVIDTFDDMNLKPELLRGIYAYGFERPSAIQQRAIMPILGERDVLAQAQSGTGKTATFSISVLQKIDTSLKQCQALILAPTRELAQQIQKVVVALGDLMNVECHACIGGTLVRDDMAALQAGVHVVVGTPGRVHDMIQRRALPTDAVQMFVLDEADEMLSRGFKDQIYDIFQLLPPTAQVVLLSATMPQDVLEVTTKFMRDPIRILVKKDELTLEGIKQFYVAVEKEEWKLDTLCDLYETVTVTQAVIFCNTRRKVDWLTEQLTERDFTVSSMHGDMDQAQRDTLMHEFRTGSSRILITTDLLARGIDVQQVSLVINYDLPANRENYIHRIGRGGRFGRKGVSINFVTNDDVRMMREIEQFYNTHIEEMPMNIADLI.

The short motif at 19–47 (DTFDDMNLKPELLRGIYAYGFERPSAIQQ) is the Q motif element. The 171-residue stretch at 50–220 (IMPILGERDV…TKFMRDPIRI (171 aa)) folds into the Helicase ATP-binding domain. 63–70 (AQSGTGKT) contacts ATP. A Phosphoserine modification is found at Ser65. The DEAD box motif lies at 168 to 171 (DEAD). Residues 231 to 392 (GIKQFYVAVE…EMPMNIADLI (162 aa)) enclose the Helicase C-terminal domain.

Belongs to the DEAD box helicase family. eIF4A subfamily. As to quaternary structure, component of the eIF4F complex, which composition varies with external and internal environmental conditions. It is composed of at least eIF4A, eIF4E and eIF4G.

Its subcellular location is the cytoplasm. The catalysed reaction is ATP + H2O = ADP + phosphate + H(+). ATP-dependent RNA helicase which is a subunit of the eIF4F complex involved in cap recognition and is required for mRNA binding to ribosome. In the current model of translation initiation, eIF4A unwinds RNA secondary structures in the 5'-UTR of mRNAs which is necessary to allow efficient binding of the small ribosomal subunit, and subsequent scanning for the initiator codon. The chain is ATP-dependent RNA helicase eIF4A (tif1) from Schizosaccharomyces pombe (strain 972 / ATCC 24843) (Fission yeast).